Reading from the N-terminus, the 382-residue chain is MKITKITTYRLPPRWMFLKIETDEGVVGWGEPVIEGRARTVEAAVHELSDYLIGQDPSRINDLWQVMYRAGFYRGGPILMSAIAGIDQALWDIKGKVLNAPVWQLMGGLVRDKIKAYSWVGGDRPADVIDGIKTLREIGFDTFKLNGCEELGLIDNSRAVDAAVNTVAQIREAFGNQIEFGLDFHGRVSAPMAKVLIKELEPYRPLFIEEPVLAEQAEYYPKLAAQTHIPLAAGERMFSRFDFKRVLEAGGISILQPDLSHAGGITECYKIAGMAEAYDVTLAPHCPLGPIALAACLHIDFVSYNAVLQEQSMGIHYNKGAELLDFVKNKEDFSMVGGFFKPLTKPGLGVEIDEAKVIEFSKNAPDWRNPLWRHEDNSVAEW.

Position 183 (D183) interacts with Mg(2+). The active-site Proton donor is the H185. The Mg(2+) site is built by E209 and E235. Residue H285 is the Proton acceptor of the active site.

Belongs to the mandelate racemase/muconate lactonizing enzyme family. GalD subfamily. Mg(2+) is required as a cofactor.

The catalysed reaction is D-galactonate = 2-dehydro-3-deoxy-D-galactonate + H2O. The protein operates within carbohydrate acid metabolism; D-galactonate degradation; D-glyceraldehyde 3-phosphate and pyruvate from D-galactonate: step 1/3. Catalyzes the dehydration of D-galactonate to 2-keto-3-deoxy-D-galactonate. The chain is D-galactonate dehydratase from Escherichia coli O45:K1 (strain S88 / ExPEC).